The following is a 248-amino-acid chain: tRNA (guanine-N(1)-)-methyltransferase (248 aa).

S-adenosyl-L-methionine contacts are provided by residues Gly-126 and 150 to 155; that span reads LGDYVL. Positions 224–248 are disordered; the sequence is WRRTQQEERTRERRPDLWAAFDSED. The segment covering 227-239 has biased composition (basic and acidic residues); sequence TQQEERTRERRPD.

This sequence belongs to the RNA methyltransferase TrmD family. As to quaternary structure, homodimer.

The protein resides in the cytoplasm. The catalysed reaction is guanosine(37) in tRNA + S-adenosyl-L-methionine = N(1)-methylguanosine(37) in tRNA + S-adenosyl-L-homocysteine + H(+). Functionally, specifically methylates guanosine-37 in various tRNAs. The protein is tRNA (guanine-N(1)-)-methyltransferase of Micrococcus luteus (strain ATCC 4698 / DSM 20030 / JCM 1464 / CCM 169 / CCUG 5858 / IAM 1056 / NBRC 3333 / NCIMB 9278 / NCTC 2665 / VKM Ac-2230) (Micrococcus lysodeikticus).